The following is a 282-amino-acid chain: 4-diphosphocytidyl-2-C-methyl-D-erythritol kinase (282 aa).

Residue Lys15 is part of the active site. Position 98–108 (98–108 (PMGGGVGGGSS)) interacts with ATP. Asp140 is a catalytic residue.

The protein belongs to the GHMP kinase family. IspE subfamily.

It carries out the reaction 4-CDP-2-C-methyl-D-erythritol + ATP = 4-CDP-2-C-methyl-D-erythritol 2-phosphate + ADP + H(+). It participates in isoprenoid biosynthesis; isopentenyl diphosphate biosynthesis via DXP pathway; isopentenyl diphosphate from 1-deoxy-D-xylulose 5-phosphate: step 3/6. In terms of biological role, catalyzes the phosphorylation of the position 2 hydroxy group of 4-diphosphocytidyl-2C-methyl-D-erythritol. This is 4-diphosphocytidyl-2-C-methyl-D-erythritol kinase from Azoarcus sp. (strain BH72).